We begin with the raw amino-acid sequence, 82 residues long: uncharacterized protein (82 aa).

This is an uncharacterized protein from Saccharomyces cerevisiae (strain ATCC 204508 / S288c) (Baker's yeast).